Consider the following 193-residue polypeptide: uncharacterized protein (193 aa).

This is an uncharacterized protein from Dictyostelium discoideum (Social amoeba).